Reading from the N-terminus, the 216-residue chain is Ribosomal RNA small subunit methyltransferase G (216 aa).

Residues Gly-82, Leu-87, 135–136, and Arg-148 each bind S-adenosyl-L-methionine; that span reads AE.

The protein belongs to the methyltransferase superfamily. RNA methyltransferase RsmG family.

It localises to the cytoplasm. The catalysed reaction is guanosine(527) in 16S rRNA + S-adenosyl-L-methionine = N(7)-methylguanosine(527) in 16S rRNA + S-adenosyl-L-homocysteine. Its function is as follows. Specifically methylates the N7 position of guanine in position 527 of 16S rRNA. The chain is Ribosomal RNA small subunit methyltransferase G from Caulobacter vibrioides (strain ATCC 19089 / CIP 103742 / CB 15) (Caulobacter crescentus).